The primary structure comprises 315 residues: WD repeat domain-containing protein 83 (315 aa).

7 WD repeats span residues 23–62 (CQQG…LLKT), 65–104 (GHGY…VTRK), 107–146 (GHAG…MEPI), 151–188 (ESQD…LQVD), 189–228 (YIGS…MLGE), 233–272 (VNKG…LTLK), and 275–313 (VGKA…AAEN).

Belongs to the WD repeat MORG1 family.

The protein resides in the cytoplasm. Functionally, molecular scaffold protein for various multimeric protein complexes. Acts as a module in the assembly of a multicomponent scaffold for the ERK pathway, linking ERK responses to specific agonists. Also involved in response to hypoxia by acting as a negative regulator of HIF1A/HIF-1-alpha. This is WD repeat domain-containing protein 83 (wdr83) from Danio rerio (Zebrafish).